The following is a 230-amino-acid chain: Large ribosomal subunit protein uL1 (230 aa).

This sequence belongs to the universal ribosomal protein uL1 family. Part of the 50S ribosomal subunit.

In terms of biological role, binds directly to 23S rRNA. The L1 stalk is quite mobile in the ribosome, and is involved in E site tRNA release. Functionally, protein L1 is also a translational repressor protein, it controls the translation of the L11 operon by binding to its mRNA. The sequence is that of Large ribosomal subunit protein uL1 from Bradyrhizobium diazoefficiens (strain JCM 10833 / BCRC 13528 / IAM 13628 / NBRC 14792 / USDA 110).